The primary structure comprises 445 residues: Phosphoglucosamine mutase (445 aa).

Residue serine 102 is the Phosphoserine intermediate of the active site. 4 residues coordinate Mg(2+): serine 102, aspartate 241, aspartate 243, and aspartate 245. Serine 102 bears the Phosphoserine mark.

This sequence belongs to the phosphohexose mutase family. Requires Mg(2+) as cofactor. Post-translationally, activated by phosphorylation.

The enzyme catalyses alpha-D-glucosamine 1-phosphate = D-glucosamine 6-phosphate. Its function is as follows. Catalyzes the conversion of glucosamine-6-phosphate to glucosamine-1-phosphate. This chain is Phosphoglucosamine mutase, found in Haemophilus influenzae (strain PittEE).